Reading from the N-terminus, the 35-residue chain is Small toxic polypeptide LdrB (35 aa).

A helical transmembrane segment spans residues 10-30; sequence FWHDLAAPILAGIITAAIVGW.

This sequence belongs to the Ldr toxic peptide family.

The protein resides in the cell inner membrane. In terms of biological role, toxic component of a type I toxin-antitoxin (TA) system. Overexpression causes rapid cell killing, probably by disrupting the cell inner membrane and disruption of ATP synthesis. This is Small toxic polypeptide LdrB (ldrB) from Escherichia coli (strain K12).